Consider the following 25-residue polypeptide: Gastrin-releasing peptide (25 aa).

The residue at position 25 (Met25) is a Methionine amide.

The protein belongs to the bombesin/neuromedin-B/ranatensin family.

The protein localises to the secreted. It localises to the cytoplasmic vesicle. It is found in the secretory vesicle lumen. Functionally, stimulates the release of gastrin and other gastrointestinal hormones. This is Gastrin-releasing peptide (grp) from Scyliorhinus canicula (Small-spotted catshark).